Consider the following 529-residue polypeptide: F-box/LRR-repeat protein At5g63520 (529 aa).

The disordered stretch occupies residues 1-22 (MAEVSLTKKEMTTKGKSENSKK). The F-box domain maps to 31–78 (VPIAAMNEDLLHNILLRLPAKSFAFASCVNRFWSSVCNRILSRPKMIS). LRR repeat units lie at residues 265–288 (GNEP…IFAR) and 418–441 (QVYL…LRNL).

This Arabidopsis thaliana (Mouse-ear cress) protein is F-box/LRR-repeat protein At5g63520.